Reading from the N-terminus, the 161-residue chain is Troponin C, slow skeletal and cardiac muscles (161 aa).

The residue at position 1 (Met1) is an N-acetylmethionine. EF-hand domains follow at residues Gln16 to Asn51, Pro52 to Asp87, Lys92 to Thr127, and Ile128 to Glu161. 13 residues coordinate Ca(2+): Asp65, Asp67, Ser69, Thr71, Asp105, Asn107, Asp109, Tyr111, Glu116, Asn143, Asp145, Arg147, and Glu152.

This sequence belongs to the troponin C family.

Its function is as follows. Troponin is the central regulatory protein of striated muscle contraction. Tn consists of three components: Tn-I which is the inhibitor of actomyosin ATPase, Tn-T which contains the binding site for tropomyosin and Tn-C. The binding of calcium to Tn-C abolishes the inhibitory action of Tn on actin filaments. This chain is Troponin C, slow skeletal and cardiac muscles (TNNC1), found in Coturnix japonica (Japanese quail).